We begin with the raw amino-acid sequence, 234 residues long: Preprocaerulein type-4 (234 aa).

Residues 1–26 (MFKGILLCVLFAVLSANPLSQPEGFA) form the signal peptide. A propeptide spanning residues 27–73 (DEEERDVRGLASLLGKALKAALKIGANALGGSPQQREANDERRFADG) is cleaved from the precursor. Position 77 is a sulfotyrosine (tyrosine 77). A Phenylalanine amide modification is found at phenylalanine 83. A propeptide spanning residues 87 to 137 (DDEDDVNERDVRGFGSFLGKALKAGLKIGTHFLGGAPQQREANDERRFADG) is cleaved from the precursor. Position 141 is a sulfotyrosine (tyrosine 141). Residue phenylalanine 147 is modified to Phenylalanine amide. A propeptide spanning residues 151-152 (DG) is cleaved from the precursor. Residue tyrosine 156 is modified to Sulfotyrosine. Phenylalanine 162 is subject to Phenylalanine amide. The propeptide occupies 166 to 216 (DDEDDVHERDVRGFGSFLGKALKAALKIGANALGGSPQQREANDERRFADG). A disordered region spans residues 198–234 (LGGSPQQREANDERRFADGQQDYTGWMDFGRRNGEDD). A Sulfotyrosine modification is found at tyrosine 220. Phenylalanine amide is present on phenylalanine 226. The propeptide occupies 230–234 (NGEDD).

Belongs to the gastrin/cholecystokinin family. Expressed by the skin glands.

It is found in the secreted. The pharmacological activities of caerulein are quite similar to the physiological activities of gastrin and related peptides. This Xenopus borealis (Kenyan clawed frog) protein is Preprocaerulein type-4.